We begin with the raw amino-acid sequence, 515 residues long: FADH(2)-dependent monooxygenase TftD (515 aa).

100-104 (RLPDA) contacts substrate. Residues 151–153 (LNF), 157–160 (QTDR), and threonine 192 contribute to the FAD site. 203–204 (GC) serves as a coordination point for substrate. 457–460 (TMTR) contacts FAD.

This sequence belongs to the FADH(2)-utilizing monooxygenase family. Homotetramer. The chlorophenol-4-monooxygenase is composed of an oxygenase component TftD and a reductase component TftC.

It functions in the pathway xenobiotic degradation. In terms of biological role, oxygenase component of a two-component system that degrades 2,4,5-trichlorophenol. Uses FADH(2) supplied by TftC to oxidize 2,4,5-trichlorophenol (2,4,5-TCP) to 2,5-dichloro-p-benzoquinone, which is chemically reduced to 2,5-dichloro-p-hydroquinone (2,5-DiCHQ). Then, TftD oxidizes the latter to 5-chloro-2-hydroxy-p-benzoquinone. The sequence is that of FADH(2)-dependent monooxygenase TftD (tftD) from Burkholderia cepacia (Pseudomonas cepacia).